The sequence spans 180 residues: Adenine phosphoribosyltransferase (180 aa).

Ser2 carries the post-translational modification N-acetylserine. Phosphoserine is present on residues Ser15 and Ser30. A Phosphotyrosine modification is found at Tyr60. Position 66 is a phosphoserine (Ser66). At Lys114 the chain carries N6-acetyllysine. Thr135 is subject to Phosphothreonine.

It belongs to the purine/pyrimidine phosphoribosyltransferase family. As to quaternary structure, homodimer.

The protein resides in the cytoplasm. The enzyme catalyses AMP + diphosphate = 5-phospho-alpha-D-ribose 1-diphosphate + adenine. It functions in the pathway purine metabolism; AMP biosynthesis via salvage pathway; AMP from adenine: step 1/1. Functionally, catalyzes a salvage reaction resulting in the formation of AMP, that is energically less costly than de novo synthesis. The chain is Adenine phosphoribosyltransferase from Mastomys natalensis (African soft-furred rat).